Reading from the N-terminus, the 141-residue chain is Large ribosomal subunit protein uL16 (141 aa).

Basic residues predominate over residues M1 to G19. The tract at residues M1–Y22 is disordered.

Belongs to the universal ribosomal protein uL16 family. In terms of assembly, part of the 50S ribosomal subunit.

Its function is as follows. Binds 23S rRNA and is also seen to make contacts with the A and possibly P site tRNAs. The chain is Large ribosomal subunit protein uL16 from Nitratiruptor sp. (strain SB155-2).